Consider the following 893-residue polypeptide: DNA gyrase subunit A (893 aa).

One can recognise a Topo IIA-type catalytic domain in the interval 35–501; it reads LPDVRDGLKP…GLEDLEDEDL (467 aa). Tyrosine 123 acts as the O-(5'-phospho-DNA)-tyrosine intermediate in catalysis. Residues 528–534 carry the GyrA-box motif; it reads QNRGGRG. Residues 810 to 893 are disordered; it reads VNEEDDNEEN…ASDNEEDSDE (84 aa). 2 stretches are compositionally biased toward acidic residues: residues 812-821 and 852-862; these read EEDDNEENAD and DAEMESVESPE. A compositionally biased stretch (basic and acidic residues) spans 863–879; that stretch reads NDDRIDIRQDFMDRVNE. Residues 880-893 are compositionally biased toward acidic residues; the sequence is DIESASDNEEDSDE.

It belongs to the type II topoisomerase GyrA/ParC subunit family. In terms of assembly, heterotetramer, composed of two GyrA and two GyrB chains. In the heterotetramer, GyrA contains the active site tyrosine that forms a transient covalent intermediate with DNA, while GyrB binds cofactors and catalyzes ATP hydrolysis.

Its subcellular location is the cytoplasm. The enzyme catalyses ATP-dependent breakage, passage and rejoining of double-stranded DNA.. Its function is as follows. A type II topoisomerase that negatively supercoils closed circular double-stranded (ds) DNA in an ATP-dependent manner to modulate DNA topology and maintain chromosomes in an underwound state. Negative supercoiling favors strand separation, and DNA replication, transcription, recombination and repair, all of which involve strand separation. Also able to catalyze the interconversion of other topological isomers of dsDNA rings, including catenanes and knotted rings. Type II topoisomerases break and join 2 DNA strands simultaneously in an ATP-dependent manner. The chain is DNA gyrase subunit A from Staphylococcus epidermidis (strain ATCC 35984 / DSM 28319 / BCRC 17069 / CCUG 31568 / BM 3577 / RP62A).